The following is a 334-amino-acid chain: MALPEFSMRQLLEAGVHFGHQSHRWNPKMAEYIFGARNNIHIIDLAQTVPLLHRALQAVSDTVAKGGRVLFVGTKRQAQDGVAEAAKRSAQYFVNSRWLGGTLTNWKTISGSIKRLRHLDEVLNSGDANAYTKKERLTLQRERDKLDRSLGGIKDMGGLPDLIFVIDTNKEDIAIQEAQRLNIPVAAIVDTNCDPKGITYLVPGNDDAGRAITLYCDLIARAVIDGISRAQGDSGFDIGASVAPVREELPAAAAPTATAFQGLAGPRGTADDLKKLTGVSGAIEKKFNDLGIFHFWQLAELDRDTAHKIGEEVGLPSRADGWVAQAKAMTAEAE.

The protein belongs to the universal ribosomal protein uS2 family.

The protein is Small ribosomal subunit protein uS2 of Rhodopseudomonas palustris (strain BisB18).